The chain runs to 72 residues: Translation initiation factor IF-1 (72 aa).

An S1-like domain is found at 1 to 72; sequence MSKSDYIELE…TKGRITFRHK (72 aa).

The protein belongs to the IF-1 family. As to quaternary structure, component of the 30S ribosomal translation pre-initiation complex which assembles on the 30S ribosome in the order IF-2 and IF-3, IF-1 and N-formylmethionyl-tRNA(fMet); mRNA recruitment can occur at any time during PIC assembly.

The protein localises to the cytoplasm. One of the essential components for the initiation of protein synthesis. Stabilizes the binding of IF-2 and IF-3 on the 30S subunit to which N-formylmethionyl-tRNA(fMet) subsequently binds. Helps modulate mRNA selection, yielding the 30S pre-initiation complex (PIC). Upon addition of the 50S ribosomal subunit IF-1, IF-2 and IF-3 are released leaving the mature 70S translation initiation complex. This Vesicomyosocius okutanii subsp. Calyptogena okutanii (strain HA) protein is Translation initiation factor IF-1.